A 239-amino-acid polypeptide reads, in one-letter code: Small ribosomal subunit protein uS3c (239 aa).

A KH type-2 domain is found at 43-139 (IKNYIQKNRK…RLNISIEKVK (97 aa)). The disordered stretch occupies residues 50 to 80 (NRKKGSNRKIESDSSSEVITHNRKTDSGSSS).

Belongs to the universal ribosomal protein uS3 family. As to quaternary structure, part of the 30S ribosomal subunit.

Its subcellular location is the plastid. The protein localises to the chloroplast. The chain is Small ribosomal subunit protein uS3c (rps3) from Agrostis stolonifera (Creeping bentgrass).